Here is a 459-residue protein sequence, read N- to C-terminus: Transcription factor mlcR (459 aa).

The segment at residues 21–53 (CDRCHAQKLKCTGSNANLVRAQCQRCQQAGLRC) is a DNA-binding region (zn(2)-C6 fungal-type). Disordered regions lie at residues 64-84 (LHKEAAAGTTRATETSQPMTA) and 135-170 (DPESFPGGWPQPNTFRDDANSNESSGIPDLGYDFEG). The span at 69–78 (AAGTTRATET) shows a compositional bias: low complexity.

It is found in the nucleus. In terms of biological role, transcription factor that regulates the gene cluster that mediates the biosynthesis of compactin, also known as mevastatin or ML-236B, and which acts as a potent competitive inhibitor of HMG-CoA reductase. Binds to the consensus-binding motif 5'-WCGG-N(6)-TCGG-3' of target genes. This Penicillium citrinum protein is Transcription factor mlcR.